The primary structure comprises 535 residues: High-affinity fructose transporter ght6 (535 aa).

Topologically, residues Met-1 to Met-9 are cytoplasmic. Residues Leu-10–Ile-30 traverse the membrane as a helical segment. The Extracellular segment spans residues Thr-31 to Gln-58. A helical transmembrane segment spans residues Gly-59–Leu-79. At Gly-80–Lys-87 the chain is on the cytoplasmic side. The chain crosses the membrane as a helical span at residues Cys-88 to Pro-108. Residues Ser-109–Gln-112 lie on the Extracellular side of the membrane. A helical membrane pass occupies residues Met-113–Gly-133. The Cytoplasmic segment spans residues Tyr-134 to Arg-144. A helical membrane pass occupies residues Gly-145–Ile-165. Topologically, residues Asn-166–Arg-181 are extracellular. The chain crosses the membrane as a helical span at residues Val-182–Pro-202. Topologically, residues Glu-203–Thr-268 are cytoplasmic. Residues Leu-269–Phe-287 traverse the membrane as a helical segment. The Extracellular portion of the chain corresponds to Tyr-288–Phe-303. A helical membrane pass occupies residues Leu-304–Leu-324. Over Glu-325–Arg-330 the chain is Cytoplasmic. The helical transmembrane segment at Gly-331 to Gly-351 threads the bilayer. Residues Asp-352–Arg-365 lie on the Extracellular side of the membrane. Asn-359 is a glycosylation site (N-linked (GlcNAc...) asparagine). The helical transmembrane segment at Ala-366–Ala-386 threads the bilayer. At Pro-387 to Ala-406 the chain is on the cytoplasmic side. The helical transmembrane segment at Ala-407–Ile-427 threads the bilayer. Residues Ser-428–Lys-434 lie on the Extracellular side of the membrane. Residues Tyr-435–Lys-455 form a helical membrane-spanning segment. The Cytoplasmic portion of the chain corresponds to Glu-456 to Leu-535. Basic and acidic residues predominate over residues Asp-484–Glu-508. Residues Asp-484–Leu-535 form a disordered region. Over residues Ser-513–Leu-535 the composition is skewed to polar residues.

It belongs to the major facilitator superfamily. Sugar transporter (TC 2.A.1.1) family.

It is found in the membrane. Its function is as follows. High-affinity fructose transporter. The chain is High-affinity fructose transporter ght6 (ght6) from Schizosaccharomyces pombe (strain 972 / ATCC 24843) (Fission yeast).